The following is a 170-amino-acid chain: Putative pre-16S rRNA nuclease (170 aa).

The disordered stretch occupies residues 1–29 (MVAASHRSPDRPGDPEGLEPGTGRGRRLG).

It belongs to the YqgF nuclease family.

It localises to the cytoplasm. Could be a nuclease involved in processing of the 5'-end of pre-16S rRNA. This chain is Putative pre-16S rRNA nuclease, found in Mycobacterium ulcerans (strain Agy99).